The sequence spans 260 residues: MPDIDKHKLSLSFSRAAAQYDAIAGFQQQVAARLAQLLPAIPATCVLDGGCGTGTSSALLTRHWPDALLLACDLSPEMVRQAHARQLTAVCGDLEQLPFSKACFDVVWSSLVLQWCQPQLAYPELQRVLKHGGRLLFSTLTSGSLHELESTFGEIDRHRRVLPFASEQQVVDALYAAGFEHVQCQAERWVTQHADLKTLLTSIRGIGANQTGAARRPGMMGKTQWQAAQVRYENLRDADGMLPLTYSLLFVSAEKSRAQD.

This sequence belongs to the methyltransferase superfamily.

It carries out the reaction malonyl-[ACP] + S-adenosyl-L-methionine = malonyl-[ACP] methyl ester + S-adenosyl-L-homocysteine. It participates in cofactor biosynthesis; biotin biosynthesis. Functionally, converts the free carboxyl group of a malonyl-thioester to its methyl ester by transfer of a methyl group from S-adenosyl-L-methionine (SAM). It allows to synthesize pimeloyl-ACP via the fatty acid synthetic pathway. This chain is Malonyl-[acyl-carrier protein] O-methyltransferase, found in Herminiimonas arsenicoxydans.